We begin with the raw amino-acid sequence, 490 residues long: Protoporphyrinogen oxidase (490 aa).

Residues 7-12, 32-33, tryptophan 40, 61-64, and 466-468 each bind FAD; these read GGGIAG, EK, GPRT, and VSI.

This sequence belongs to the protoporphyrinogen/coproporphyrinogen oxidase family. Protoporphyrinogen oxidase subfamily. Requires FAD as cofactor.

It is found in the mitochondrion. It carries out the reaction protoporphyrinogen IX + 3 O2 = protoporphyrin IX + 3 H2O2. It participates in porphyrin-containing compound metabolism; protoporphyrin-IX biosynthesis; protoporphyrin-IX from protoporphyrinogen-IX: step 1/1. Its function is as follows. Catalyzes the 6-electron oxidation of protoporphyrinogen-IX to form protoporphyrin-IX. The polypeptide is Protoporphyrinogen oxidase (hem14) (Schizosaccharomyces pombe (strain 972 / ATCC 24843) (Fission yeast)).